Reading from the N-terminus, the 81-residue chain is EC protein III (81 aa).

This sequence belongs to the metallothionein superfamily. Type 15 family.

In terms of biological role, binds 5 molecules of zinc. May have a role in Zn(2+) homeostasis during embryogenesis. The sequence is that of EC protein III from Triticum aestivum (Wheat).